The sequence spans 237 residues: MLRSCTAGLRSIWALRGRREGAPRLSMDLQPARRLFSTEKVIHKDWALPNPSWSKDLKLLFDQFMKKCEDGSWERLPSYKRRSTQESEDFKTYFLDPKLVEEERLSQAQLFTRGFEDGLGFEYVIFKNNDEKRTVCLFQGGPYLQGVPGLLHGGAMATMIDIALGSCTGGAVMTANLNINFKRPVPLCSVVVINSQLDKLEGRKLFLSCNVRSVDEKTLYSEATGLFIKLDPEKSST.

The transit peptide at 1 to 36 directs the protein to the mitochondrion; it reads MLRSCTAGLRSIWALRGRREGAPRLSMDLQPARRLF. Ser37 carries the phosphoserine modification. N6-succinyllysine occurs at positions 55, 66, and 98. Asp161 serves as the catalytic Proton donor/acceptor. Substrate is bound by residues Asn180, Lys182, and 203–204; that span reads RK. Lys204 carries the post-translational modification N6-succinyllysine.

It belongs to the THEM4/THEM5 thioesterase family. In terms of assembly, homodimer and homotetramer. Interacts with AKT1 in the cytosol. Phosphorylated.

It is found in the cell membrane. Its subcellular location is the cell projection. The protein resides in the ruffle membrane. It localises to the cytoplasm. The protein localises to the mitochondrion. It is found in the mitochondrion inner membrane. Its subcellular location is the mitochondrion intermembrane space. It catalyses the reaction hexadecanoyl-CoA + H2O = hexadecanoate + CoA + H(+). The enzyme catalyses octanoyl-CoA + H2O = octanoate + CoA + H(+). The catalysed reaction is decanoyl-CoA + H2O = decanoate + CoA + H(+). It carries out the reaction dodecanoyl-CoA + H2O = dodecanoate + CoA + H(+). It catalyses the reaction tetradecanoyl-CoA + H2O = tetradecanoate + CoA + H(+). The enzyme catalyses (9Z)-octadecenoyl-CoA + H2O = (9Z)-octadecenoate + CoA + H(+). The catalysed reaction is (5Z,8Z,11Z,14Z)-eicosatetraenoyl-CoA + H2O = (5Z,8Z,11Z,14Z)-eicosatetraenoate + CoA + H(+). Has acyl-CoA thioesterase activity towards medium and long-chain (C14 to C18) fatty acyl-CoA substrates, and probably plays a role in mitochondrial fatty acid metabolism. Plays a role in the apoptotic process, possibly via its regulation of AKT1 activity. This is Acyl-coenzyme A thioesterase THEM4 (THEM4) from Bos taurus (Bovine).